The sequence spans 368 residues: 2-deoxy-scyllo-inosose synthase (368 aa).

NAD(+) is bound by residues Asp42, 72 to 75 (EEYK), 104 to 108 (GLTGN), 128 to 129 (TT), 139 to 141 (SIK), 150 to 151 (KN), and Gln176. Lys141 is a catalytic residue. Glu183 lines the Co(2+) pocket. The active site involves Glu243. Co(2+) is bound by residues His246 and His262.

This sequence belongs to the sugar phosphate cyclases superfamily. DOI synthase family. Was isolated as a heterodimeric enzyme comprising of BtrC and a smaller polypeptide further identified as PdxT by sequence homology. Homodimer in solution. The cofactor is NAD(+). It depends on Co(2+) as a cofactor.

The enzyme catalyses D-glucose 6-phosphate = 2-deoxy-L-scyllo-inosose + phosphate. Its pathway is metabolic intermediate biosynthesis; 2-deoxystreptamine biosynthesis; 2-deoxystreptamine from D-glucose 6-phosphate: step 1/4. It functions in the pathway antibiotic biosynthesis; butirosin biosynthesis. Strongly inhibited by EDTA, zinc and Cu(2+). Catalyzes the intramolecular carbocycle formation from D-glucose-6-phosphate to 2-deoxy-scyllo-inosose (DOI). The protein is 2-deoxy-scyllo-inosose synthase (btrC) of Niallia circulans (Bacillus circulans).